The chain runs to 353 residues: Trans-enoyl reductase RAP2 (353 aa).

46–49 (CDHK) is a binding site for NADP(+). 131 to 138 (TGLSTIGM) contacts substrate. NADP(+) contacts are provided by residues 189–192 (SPRN), tyrosine 207, and 254–255 (LE). Position 274-278 (274-278 (GMALL)) interacts with substrate. 343-344 (VS) is a binding site for NADP(+).

This sequence belongs to the zinc-containing alcohol dehydrogenase family. In terms of assembly, monomer.

Its pathway is secondary metabolite biosynthesis. Its function is as follows. Trans-enoyl reductase; part of the gene cluster that mediates the biosynthesis of a tyrosine-derived cytochalasan acting as a fungal signal recognized by resistant rice plants and leads to avirulence in Pi33 resistant rice cultivars. The first step in the pathway is catalyzed by the hybrid PKS-NRPS ACE1, assisted by the enoyl reductase RAP1, that are responsible for fusion of the tyrosine precursor and the polyketide backbone. The polyketide synthase module (PKS) of ACE1 is responsible for the synthesis of the polyketide backbone and the downstream nonribosomal peptide synthetase (NRPS) amidates the carboxyl end of the polyketide with the tyrosine precursor. Because ACE1 lacks a designated enoylreductase (ER) domain, the required activity is provided the enoyl reductase RAP1. Reduction by the hydrolyase ORFZ, followed by dehydration and intra-molecular Diels-Alder cyclization by the Diels-Alderase ORF3 then yield the required isoindolone-fused macrocycle. A number of oxidative steps catalyzed by the tailoring enzymes identified within the cluster, including cytochrome P450 monooxygenases CYP1 to CYP4, the FAD-linked oxidoreductase OXR2 and the short-chain dehydrogenase/reductase OXR1, are further required to afford the final cytochalasans that confer avirulence and which have still to be identified. The monooxygenase CYP1 has been shown to be a site-selective C-18 hydroxylase whereas the function of CYP3 is the site-selective epoxidation of the C-6/C-7 olefin that is present in some intermediate compounds. Finally, SYN2 and RAP2 are not required for avirulence in Pi33 resistant rice cultivars. The protein is Trans-enoyl reductase RAP2 of Pyricularia oryzae (strain 70-15 / ATCC MYA-4617 / FGSC 8958) (Rice blast fungus).